We begin with the raw amino-acid sequence, 201 residues long: Recombination protein RecR (201 aa).

The C4-type zinc-finger motif lies at 57 to 72 (CADCRTFTEQEVCNIC). A Toprim domain is found at 81–176 (GQICVVESPA…EASRIAHGVP (96 aa)).

This sequence belongs to the RecR family.

Its function is as follows. May play a role in DNA repair. It seems to be involved in an RecBC-independent recombinational process of DNA repair. It may act with RecF and RecO. The sequence is that of Recombination protein RecR from Shigella boydii serotype 18 (strain CDC 3083-94 / BS512).